We begin with the raw amino-acid sequence, 449 residues long: Chromosomal replication initiator protein DnaA (449 aa).

The interval 1 to 72 (MPNLEELWAY…VEGVYEFAQL (72 aa)) is domain I, interacts with DnaA modulators. A domain II region spans residues 72-109 (LEVDPVIMTKDELQPAPATDQRPAVEEDDQNLTFKAKT). The tract at residues 110-326 (HLNPKYTFDR…GALVRVQAFS (217 aa)) is domain III, AAA+ region. ATP contacts are provided by Gly-154, Gly-156, Lys-157, and Thr-158. Positions 327–449 (TMKNEDITTS…ELRNILKNRG (123 aa)) are domain IV, binds dsDNA.

This sequence belongs to the DnaA family. Oligomerizes as a right-handed, spiral filament on DNA at oriC.

It localises to the cytoplasm. Functionally, plays an essential role in the initiation and regulation of chromosomal replication. ATP-DnaA binds to the origin of replication (oriC) to initiate formation of the DNA replication initiation complex once per cell cycle. Binds the DnaA box (a 9 base pair repeat at the origin) and separates the double-stranded (ds)DNA. Forms a right-handed helical filament on oriC DNA; dsDNA binds to the exterior of the filament while single-stranded (ss)DNA is stabiized in the filament's interior. The ATP-DnaA-oriC complex binds and stabilizes one strand of the AT-rich DNA unwinding element (DUE), permitting loading of DNA polymerase. After initiation quickly degrades to an ADP-DnaA complex that is not apt for DNA replication. Binds acidic phospholipids. This chain is Chromosomal replication initiator protein DnaA, found in Lacticaseibacillus casei (strain BL23) (Lactobacillus casei).